A 643-amino-acid chain; its full sequence is Extracellular metalloproteinase 4 (643 aa).

Residues 1-18 form the signal peptide; that stretch reads MHGLLLAGLLALPLNVLA. Positions 19 to 254 are excised as a propeptide; the sequence is HPTESHSSGI…VHSVVDYVSA (236 aa). Over residues 47–57 the composition is skewed to basic and acidic residues; it reads TKSDAVPKQDD. Residues 47–71 form a disordered region; that stretch reads TKSDAVPKQDDESFTTSSTGDDNVS. The segment covering 60–71 has biased composition (polar residues); sequence FTTSSTGDDNVS. Asparagine 271 and asparagine 420 each carry an N-linked (GlcNAc...) asparagine glycan. Histidine 437 contacts Zn(2+). Glutamate 438 is an active-site residue. Histidine 441 lines the Zn(2+) pocket. N-linked (GlcNAc...) asparagine glycosylation occurs at asparagine 510.

Belongs to the peptidase M36 family. Zn(2+) is required as a cofactor.

It localises to the secreted. Its function is as follows. Secreted metalloproteinase probably acting as a virulence factor. This chain is Extracellular metalloproteinase 4 (MEP4), found in Trichophyton equinum (Horse ringworm fungus).